The sequence spans 555 residues: MARVEL domain-containing protein 2 (555 aa).

The segment covering 1 to 20 has biased composition (basic and acidic residues); sequence MSSSDARSRIRDRGYSEVPR. Positions 1–71 are disordered; sequence MSSSDARSRI…FYSSDTEEPA (71 aa). Residues 1-191 lie on the Cytoplasmic side of the membrane; it reads MSSSDARSRI…YMKSWAGLLR (191 aa). The segment covering 46 to 59 has biased composition (pro residues); that stretch reads PLPPPPLPLQPPFG. Phosphoserine occurs at positions 117, 121, and 158. A disordered region spans residues 118-142; it reads PPASPARANHHPYKDPSRGSQGTFN. Thr-163 is modified (phosphothreonine). Positions 185–364 constitute an MARVEL domain; that stretch reads SWAGLLRILG…SALVCLKLWR (180 aa). The chain crosses the membrane as a helical span at residues 192–212; it reads ILGVVELLLGAGVFACVTAYI. The Extracellular segment spans residues 213-251; that stretch reads HKDNEWYNLFGYTQPYGMGGLGSLGNTYGGYYYSGPKTP. Residues 252–272 form a helical membrane-spanning segment; that stretch reads FVLVVAGLAWITTIIILVLGM. At 273 to 288 the chain is on the cytoplasmic side; it reads SMYYRTILLDSNWWPL. Residues 289-309 form a helical membrane-spanning segment; sequence TEFGVNVALFILYMAAAIVYV. At 310–338 the chain is on the extracellular side; that stretch reads NDTNRGGLCYYPLFNTPMNAMFCRVEGGQ. Residues 339–359 traverse the membrane as a helical segment; that stretch reads IAAMIFLFVTMIVYLVSALVC. At 360–555 the chain is on the cytoplasmic side; sequence LKLWRHEAAR…VMNWDTQGYP (196 aa). Ser-384 carries the post-translational modification Phosphoserine. A Glycyl lysine isopeptide (Lys-Gly) (interchain with G-Cter in ubiquitin) cross-link involves residue Lys-408. In terms of domain architecture, OCEL spans 437–548; the sequence is PDYVAKYPVI…RIQEYDKVMN (112 aa). A coiled-coil region spans residues 521–545; it reads EKKERCDYLKNKLSHIKQRIQEYDK.

The protein belongs to the ELL/occludin family. As to quaternary structure, interacts with TJP1. Interacts with the ubiquitin ligase ITCH. Interacts (via C-terminal cytoplasmic domain) with LSR (via the cytoplasmic domain), ILDR1 and ILDR2; the interaction is required to recruit MARVELD2 to tricellular contacts. Post-translationally, ubiquitinated by ITCH; but this ubiquitination does not lead to proteasomal degradation. Polyubiquitinated at Lys-408 via 'Lys-63'-linked ubiquitin chains; deubiquitinated by USP53. Phosphorylated. Detected in small intestine, stomach and kidney, in epithelial cells. Detected in pancreas, retina and lung, and in stria vascularis, utricle and the organ of Conti in the inner ear (at protein level). Predominantly detected in small intestine, lung and kidney, with lower levels in liver, testis and brain. In colon, expressed in the entire crypts.

Its subcellular location is the cell membrane. The protein resides in the cell junction. It localises to the tight junction. In terms of biological role, plays a role in the formation of tricellular tight junctions and of epithelial barriers. Required for normal hearing via its role in the separation of the endolymphatic and perilymphatic spaces of the organ of Corti in the inner ear, and for normal survival of hair cells in the organ of Corti. The polypeptide is MARVEL domain-containing protein 2 (Mus musculus (Mouse)).